Consider the following 355-residue polypeptide: 45 kDa calcium-binding protein (355 aa).

A signal peptide spans 1-29; that stretch reads MASRQAPLCGLAPCCLWLLGVVLLMNASA. The N-linked (GlcNAc...) asparagine glycan is linked to Asn-33. EF-hand domains follow at residues 91-126 and 130-165; these read KSRR…KTAE and EAVA…TKGH. Ser-92 is subject to Phosphoserine. 10 residues coordinate Ca(2+): Asp-104, Asn-106, Asp-108, Arg-110, Glu-115, Asp-143, Asp-145, Asp-147, His-149, and Glu-154. Thr-186 and Thr-210 each carry phosphothreonine. EF-hand domains are found at residues 226 to 261, 271 to 306, and 307 to 342; these read MLQF…TVEN, WVRD…MNEF, and SALN…FTGS. Ca(2+) is bound by residues Asp-239, Asp-241, Asp-243, Lys-245, and Glu-250. Thr-258 is subject to Phosphothreonine. Positions 284, 286, and 288 each coordinate Ca(2+). At Thr-292 the chain carries Phosphothreonine. 6 residues coordinate Ca(2+): Glu-295, Asp-320, Asn-322, Asn-324, Tyr-326, and Glu-331. The interval 302–355 is necessary for intracellular retention in Golgi apparatus lumen; the sequence is PMNEFSALNEAKQMIAIADENQNHYLEPEEVLKYSEFFTGSKLVDYARSVHEEF.

Belongs to the CREC family.

It localises to the golgi apparatus lumen. Its function is as follows. May regulate calcium-dependent activities in the endoplasmic reticulum lumen or post-ER compartment. This chain is 45 kDa calcium-binding protein (SDF4), found in Bos taurus (Bovine).